The primary structure comprises 292 residues: Cytidine deaminase (292 aa).

CMP/dCMP-type deaminase domains are found at residues 47–167 (TPLK…FGPK) and 186–292 (DHQD…YYSL). Residue 88 to 90 (NQE) coordinates substrate. Residue His-101 coordinates Zn(2+). Residue Glu-103 is the Proton donor of the active site. 2 residues coordinate Zn(2+): Cys-128 and Cys-131.

This sequence belongs to the cytidine and deoxycytidylate deaminase family. In terms of assembly, homodimer. Zn(2+) is required as a cofactor.

It catalyses the reaction cytidine + H2O + H(+) = uridine + NH4(+). The catalysed reaction is 2'-deoxycytidine + H2O + H(+) = 2'-deoxyuridine + NH4(+). Its function is as follows. This enzyme scavenges exogenous and endogenous cytidine and 2'-deoxycytidine for UMP synthesis. The chain is Cytidine deaminase from Haemophilus influenzae (strain 86-028NP).